A 581-amino-acid polypeptide reads, in one-letter code: Penicillin-binding protein activator LpoA (581 aa).

The signal sequence occupies residues 1–26 (MLSILMQGLRLKKCFLPILVMFFLAG). Residue cysteine 27 is the site of N-palmitoyl cysteine attachment. Cysteine 27 is lipidated: S-diacylglycerol cysteine.

It belongs to the LpoA family. As to quaternary structure, interacts with PBP1a.

It localises to the cell outer membrane. In terms of biological role, regulator of peptidoglycan synthesis that is essential for the function of penicillin-binding protein 1A (PBP1a). This is Penicillin-binding protein activator LpoA from Histophilus somni (strain 129Pt) (Haemophilus somnus).